Reading from the N-terminus, the 64-residue chain is Large ribosomal subunit protein uL29 (64 aa).

Belongs to the universal ribosomal protein uL29 family.

In Nitratiruptor sp. (strain SB155-2), this protein is Large ribosomal subunit protein uL29.